A 211-amino-acid polypeptide reads, in one-letter code: Protein-L-isoaspartate O-methyltransferase (211 aa).

Residue Ser62 is part of the active site.

The protein belongs to the methyltransferase superfamily. L-isoaspartyl/D-aspartyl protein methyltransferase family.

The protein resides in the cytoplasm. The enzyme catalyses [protein]-L-isoaspartate + S-adenosyl-L-methionine = [protein]-L-isoaspartate alpha-methyl ester + S-adenosyl-L-homocysteine. In terms of biological role, catalyzes the methyl esterification of L-isoaspartyl residues in peptides and proteins that result from spontaneous decomposition of normal L-aspartyl and L-asparaginyl residues. It plays a role in the repair and/or degradation of damaged proteins. The protein is Protein-L-isoaspartate O-methyltransferase of Shewanella sp. (strain ANA-3).